The sequence spans 534 residues: H(+)/hexose cotransporter 1 (534 aa).

The Cytoplasmic portion of the chain corresponds to 1–21; sequence MAGGGVVVVSGRGLSTGDYRG. The helical transmembrane segment at 22-42 threads the bilayer; that stretch reads GLTVYVVMVAFMAACGGLLLG. Topologically, residues 43–87 are extracellular; the sequence is YDNGVTGGVVSLEAFEKKFFPDVWAKKQEVHEDSPYCTYDNAKLQ. A helical transmembrane segment spans residues 88 to 108; that stretch reads LFVSSLFLAGLVSCLFASWIT. Topologically, residues 109–114 are cytoplasmic; it reads RNWGRK. The helical transmembrane segment at 115–135 threads the bilayer; sequence VTMGIGGAFFVAGGLVNAFAQ. The Extracellular segment spans residues 136 to 144; the sequence is DMAMLIVGR. Residues 145–165 form a helical membrane-spanning segment; the sequence is VLLGFGVGLGSQVVPQYLSEV. Topologically, residues 166–173 are cytoplasmic; the sequence is APFSHRGM. A helical membrane pass occupies residues 174 to 194; sequence LNIGYQLFVTIGILIAGLVNY. At 195 to 204 the chain is on the extracellular side; it reads AVRDWENGWR. The chain crosses the membrane as a helical span at residues 205-225; sequence LSLGPAAAPGAILFLGSLVLP. Topologically, residues 226 to 299 are cytoplasmic; sequence ESPNFLVEKG…TSFVIQFFQQ (74 aa). The chain crosses the membrane as a helical span at residues 300–322; it reads FTGINAIIFYVPVLFSSLGSANS. Topologically, residues 323-328 are extracellular; sequence AALLNT. Residues 329–349 traverse the membrane as a helical segment; the sequence is VVVGAVNVGSTLIAVMFSDKF. Topologically, residues 350-352 are cytoplasmic; it reads GRR. The helical transmembrane segment at 353 to 373 threads the bilayer; sequence FLLIEGGIQCCLAMLTTGVVL. At 374 to 387 the chain is on the extracellular side; sequence AIEFAKYGTDPLPK. A helical membrane pass occupies residues 388–408; sequence AVASGILAVICIFISGFAWSW. Over 409 to 433 the chain is Cytoplasmic; that stretch reads GPMGWLIPSEIFTLETRPAGTAVAV. A helical membrane pass occupies residues 434-454; the sequence is VGNFLFSFVIGQAFVSMLCAM. Residues 455–456 are Extracellular-facing; it reads EY. A helical transmembrane segment spans residues 457 to 477; sequence GVFLFFAGWLVIMVLCAIFLL. The Cytoplasmic segment spans residues 478 to 534; it reads PETKGVPIERVQALYARHWFWNRVMGPAAAEVIAEDEKRVAAASAIIKEEELSKAMK.

Belongs to the major facilitator superfamily. Sugar transporter (TC 2.A.1.1) family.

It is found in the membrane. Active uptake of hexoses. This is H(+)/hexose cotransporter 1 (HUP1) from Parachlorella kessleri (Green alga).